We begin with the raw amino-acid sequence, 140 residues long: Nucleoside diphosphate kinase (140 aa).

ATP-binding residues include K9, F57, R85, T91, R102, and N112. The Pros-phosphohistidine intermediate role is filled by H115.

This sequence belongs to the NDK family. Homotetramer. It depends on Mg(2+) as a cofactor.

It is found in the cytoplasm. The catalysed reaction is a 2'-deoxyribonucleoside 5'-diphosphate + ATP = a 2'-deoxyribonucleoside 5'-triphosphate + ADP. The enzyme catalyses a ribonucleoside 5'-diphosphate + ATP = a ribonucleoside 5'-triphosphate + ADP. Major role in the synthesis of nucleoside triphosphates other than ATP. The ATP gamma phosphate is transferred to the NDP beta phosphate via a ping-pong mechanism, using a phosphorylated active-site intermediate. This is Nucleoside diphosphate kinase from Chlorobaculum parvum (strain DSM 263 / NCIMB 8327) (Chlorobium vibrioforme subsp. thiosulfatophilum).